Here is a 138-residue protein sequence, read N- to C-terminus: Large ribosomal subunit protein uL16 (138 aa).

Residues 1 to 17 (MLIPRRVKHRKQHHPTR) are compositionally biased toward basic residues. A disordered region spans residues 1–24 (MLIPRRVKHRKQHHPTRRGAASGG).

It belongs to the universal ribosomal protein uL16 family. As to quaternary structure, part of the 50S ribosomal subunit.

In terms of biological role, binds 23S rRNA and is also seen to make contacts with the A and possibly P site tRNAs. The polypeptide is Large ribosomal subunit protein uL16 (Kineococcus radiotolerans (strain ATCC BAA-149 / DSM 14245 / SRS30216)).